Reading from the N-terminus, the 1004-residue chain is 26S proteasome non-ATPase regulatory subunit 1 homolog A (1004 aa).

N-acetylalanine is present on alanine 2. Lysine 166 participates in a covalent cross-link: Glycyl lysine isopeptide (Lys-Gly) (interchain with G-Cter in ubiquitin). PC repeat units follow at residues 412–447 (SATA…GGSP), 452–485 (GALY…EVIQ), 487–521 (GACL…VAGE), 522–555 (AAGI…EKII), 557–590 (GLAL…IIRY), 591–626 (GGMY…DVRR), 627–659 (TAVL…PHVR), 661–695 (GAAL…FVRQ), 696–736 (GALI…DTMS), and 739–771 (GAIL…TAVI). 2 disordered regions span residues 858-905 (EQKA…KKAP) and 959-1004 (VLSL…EYAS). A Phosphoserine modification is found at serine 896. Residues 965–987 (APTSTASPATGTAAAAQGTPASA) show a composition bias toward low complexity.

This sequence belongs to the proteasome subunit S1 family. Component of the 19S regulatory particle (RP/PA700) base subcomplex of the 26S proteasome. The 26S proteasome is composed of a core protease (CP), known as the 20S proteasome, capped at one or both ends by the 19S regulatory particle (RP/PA700). The RP/PA700 complex is composed of at least 17 different subunits in two subcomplexes, the base and the lid, which form the portions proximal and distal to the 20S proteolytic core, respectively. Ubiquitous with highest expression in flowers.

Its function is as follows. Acts as a regulatory subunit of the 26 proteasome which is involved in the ATP-dependent degradation of ubiquitinated proteins. The polypeptide is 26S proteasome non-ATPase regulatory subunit 1 homolog A (RPN2A) (Arabidopsis thaliana (Mouse-ear cress)).